A 440-amino-acid chain; its full sequence is 6-phospho-alpha-glucosidase (440 aa).

F4–D70 is an NAD(+) binding site. Residues R93 and N147 each coordinate substrate. C169 is a binding site for Mn(2+). The active-site Proton donor is D170. H200 lines the Mn(2+) pocket. The active-site Proton acceptor is Y263. Residue R283 coordinates substrate.

Homodimer. Requires NAD(+) as cofactor. The cofactor is Mn(2+). It depends on Co(2+) as a cofactor. Ni(2+) is required as a cofactor.

The catalysed reaction is alpha-maltose 6'-phosphate + H2O = D-glucose 6-phosphate + D-glucose. The protein operates within glycan biosynthesis; sucrose metabolism. Functionally, is involved in the catabolism of alpha-glycosides accumulated via a phosphoenolpyruvate-dependent phosphotransferase system (PEP-PTS). Hydrolyzes a wide variety of 6-phospho-alpha-D-glucosides including maltose-6'-phosphate, isomaltose-6'-phosphate, maltitol-6-phosphate, trehalose-6-phosphate and the 6'-phosphorylated derivatives of the five linkage-isomeric alpha-D-glucosyl-D-fructoses: trehalulose-6'-phosphate, turanose-6'-phosphate, maltulose-6'-phosphate, leucrose-6'-phosphate, and palatinose-6'-phosphate. However, sucrose-6-phosphate is not a substrate for this enzyme. This Klebsiella pneumoniae protein is 6-phospho-alpha-glucosidase.